The primary structure comprises 697 residues: MAR-binding filament-like protein 1 (697 aa).

Residues Met1 to Met41 constitute a chloroplast transit peptide. The N-terminal 38 residues, Ala42–Glu79, are a transit peptide targeting the thylakoid. Over Gly80–Phe106 the chain is Lumenal, thylakoid. The disordered stretch occupies residues Leu81–Gly100. A helical membrane pass occupies residues Val107–Leu127. The Stromal segment spans residues Ala128–Gln697. A coiled-coil region spans residues Leu203–Gln671. The interval Thr599 to Asn629 is disordered. A compositionally biased stretch (basic and acidic residues) spans Ser604–Ser615. Residues Val616–Gln627 show a composition bias toward polar residues.

Interacts with MAF1. Interacts with PTST2; the interaction is essential for the initiation of starch granules biosynthesis in leaf chloroplasts, for the correct location of the process in the stromal spaces between the thylakoid membranes, and for the association of PTST2 with the thylakoid membranes. Phosphorylated in vitro by human casein kinase II. In terms of processing, predicted to be translocated into the thylakoid by the Tat system.

It is found in the plastid. The protein resides in the chloroplast. The protein localises to the chloroplast thylakoid membrane. Its subcellular location is the chloroplast stroma. It localises to the chloroplast nucleoid. It is found in the nucleus. The protein resides in the nucleus matrix. In terms of biological role, required for the initiation of starch granules biosynthesis in leaf chloroplasts. Anchored to the thylakoid membranes with its C-terminus facing into the stroma where it is essential for localizing PTST2 and SS4 to the stromal spaces between the thylakoid membranes in order to begin starch granule formation. Associated with leaf chloroplastic nucleoids in vivo. Binds to various chloroplastic double-stranded DNA fragments without particular sequence specificity in vitro. May function at the interface between nucleoids and thylakoids possibly by anchoring nucleoids to the thylakoid membrane system in mature chloroplasts. Binds nuclear DNA. Interacts with chromatin via matrix attachment regions (MARs). Likely to participate in nuclear architecture by connecting chromatin with the nuclear matrix and potentially with the nuclear envelope. The chain is MAR-binding filament-like protein 1 from Solanum lycopersicum (Tomato).